A 53-amino-acid chain; its full sequence is Ribulose bisphosphate carboxylase large chain (53 aa).

The propeptide occupies 1–2 (MS). N-acetylproline is present on P3. N6,N6,N6-trimethyllysine is present on K14.

Belongs to the RuBisCO large chain family. Type I subfamily. As to quaternary structure, heterohexadecamer of 8 large chains and 8 small chains.

The protein resides in the plastid. The protein localises to the chloroplast. It catalyses the reaction 2 (2R)-3-phosphoglycerate + 2 H(+) = D-ribulose 1,5-bisphosphate + CO2 + H2O. The catalysed reaction is D-ribulose 1,5-bisphosphate + O2 = 2-phosphoglycolate + (2R)-3-phosphoglycerate + 2 H(+). In terms of biological role, ruBisCO catalyzes two reactions: the carboxylation of D-ribulose 1,5-bisphosphate, the primary event in carbon dioxide fixation, as well as the oxidative fragmentation of the pentose substrate in the photorespiration process. Both reactions occur simultaneously and in competition at the same active site. This is Ribulose bisphosphate carboxylase large chain (rbcL) from Malus domestica (Apple).